A 428-amino-acid polypeptide reads, in one-letter code: Serine hydroxymethyltransferase (428 aa).

Residues L117 and 121 to 123 (GHL) each bind (6S)-5,6,7,8-tetrahydrofolate. K226 carries the post-translational modification N6-(pyridoxal phosphate)lysine.

This sequence belongs to the SHMT family. Homodimer. Requires pyridoxal 5'-phosphate as cofactor.

The protein resides in the cytoplasm. It carries out the reaction (6R)-5,10-methylene-5,6,7,8-tetrahydrofolate + glycine + H2O = (6S)-5,6,7,8-tetrahydrofolate + L-serine. Its pathway is one-carbon metabolism; tetrahydrofolate interconversion. The protein operates within amino-acid biosynthesis; glycine biosynthesis; glycine from L-serine: step 1/1. Its function is as follows. Catalyzes the reversible interconversion of serine and glycine with tetrahydrofolate (THF) serving as the one-carbon carrier. This reaction serves as the major source of one-carbon groups required for the biosynthesis of purines, thymidylate, methionine, and other important biomolecules. Also exhibits THF-independent aldolase activity toward beta-hydroxyamino acids, producing glycine and aldehydes, via a retro-aldol mechanism. This chain is Serine hydroxymethyltransferase, found in Aquifex aeolicus (strain VF5).